A 116-amino-acid chain; its full sequence is Large ribosomal subunit protein bL19 (116 aa).

The protein belongs to the bacterial ribosomal protein bL19 family.

Functionally, this protein is located at the 30S-50S ribosomal subunit interface and may play a role in the structure and function of the aminoacyl-tRNA binding site. This is Large ribosomal subunit protein bL19 from Pseudomonas putida (strain W619).